A 368-amino-acid chain; its full sequence is Dual-specificity RNA methyltransferase RlmN (368 aa).

Glutamate 94 functions as the Proton acceptor in the catalytic mechanism. The 235-residue stretch at 100-334 (EEDRATLCVS…VIVRKTRGDD (235 aa)) folds into the Radical SAM core domain. A disulfide bond links cysteine 107 and cysteine 339. Positions 114, 118, and 121 each coordinate [4Fe-4S] cluster. S-adenosyl-L-methionine is bound by residues 163–164 (GE), serine 195, 217–219 (SLH), and asparagine 296. The active-site S-methylcysteine intermediate is cysteine 339.

This sequence belongs to the radical SAM superfamily. RlmN family. It depends on [4Fe-4S] cluster as a cofactor.

It is found in the cytoplasm. It catalyses the reaction adenosine(2503) in 23S rRNA + 2 reduced [2Fe-2S]-[ferredoxin] + 2 S-adenosyl-L-methionine = 2-methyladenosine(2503) in 23S rRNA + 5'-deoxyadenosine + L-methionine + 2 oxidized [2Fe-2S]-[ferredoxin] + S-adenosyl-L-homocysteine. The catalysed reaction is adenosine(37) in tRNA + 2 reduced [2Fe-2S]-[ferredoxin] + 2 S-adenosyl-L-methionine = 2-methyladenosine(37) in tRNA + 5'-deoxyadenosine + L-methionine + 2 oxidized [2Fe-2S]-[ferredoxin] + S-adenosyl-L-homocysteine. Its function is as follows. Specifically methylates position 2 of adenine 2503 in 23S rRNA and position 2 of adenine 37 in tRNAs. m2A2503 modification seems to play a crucial role in the proofreading step occurring at the peptidyl transferase center and thus would serve to optimize ribosomal fidelity. The protein is Dual-specificity RNA methyltransferase RlmN of Aeromonas salmonicida (strain A449).